We begin with the raw amino-acid sequence, 493 residues long: EGF-containing fibulin-like extracellular matrix protein 1 (493 aa).

The signal sequence occupies residues 1-17; the sequence is MLKALFLTMLTLALVKS. An EGF-like 1; atypical domain is found at 26–71; that stretch reads YTQCTDGYEWDPVRQQCKDIDECDIVPDACKGGMKCVNHYGGYLCL. One can recognise an EGF-like 2; calcium-binding domain in the interval 173-213; that stretch reads DIDECTAGTHNCRADQVCINLRGSFACQCPPGYQKRGEQCV. 15 disulfide bridges follow: cysteine 177/cysteine 190, cysteine 184/cysteine 199, cysteine 201/cysteine 212, cysteine 218/cysteine 228, cysteine 224/cysteine 237, cysteine 239/cysteine 252, cysteine 258/cysteine 268, cysteine 264/cysteine 277, cysteine 279/cysteine 292, cysteine 298/cysteine 309, cysteine 305/cysteine 318, cysteine 320/cysteine 332, cysteine 338/cysteine 350, cysteine 344/cysteine 359, and cysteine 365/cysteine 377. Residues 214 to 253 form the EGF-like 3; calcium-binding domain; it reads DIDECTIPPYCHQRCVNTPGSFYCQCSPGFQLAANNYTCV. N-linked (GlcNAc...) asparagine glycosylation is present at asparagine 249. The 40-residue stretch at 254-293 folds into the EGF-like 4; calcium-binding domain; the sequence is DINECDASNQCAQQCYNILGSFICQCNQGYELSSDRLNCE. The mediates interaction with TIMP3 stretch occupies residues 259-493; it reads DASNQCAQQC…LTIIVGPFSF (235 aa). An EGF-like 5; calcium-binding domain is found at 294-333; that stretch reads DIDECRTSSYLCQYQCVNEPGKFSCMCPQGYQVVRSRTCQ. In terms of domain architecture, EGF-like 6; calcium-binding spans 334 to 378; sequence DINECETTNECREDEMCWNYHGGFRCYPRNPCQDPYILTPENRCV.

Belongs to the fibulin family. Interacts with ECM1. Interacts with TIMP3. In the eye, associated with photoreceptor outer and inner segment regions, the nerve fiber layer, outer nuclear layer and inner and outer plexiform layers of the retina.

The protein resides in the secreted. Its subcellular location is the extracellular space. It localises to the extracellular matrix. Functionally, binds EGFR, the EGF receptor, inducing EGFR autophosphorylation and the activation of downstream signaling pathways. May play a role in cell adhesion and migration. May function as a negative regulator of chondrocyte differentiation. In the olfactory epithelium, it may regulate glial cell migration, differentiation and the ability of glial cells to support neuronal neurite outgrowth. In Homo sapiens (Human), this protein is EGF-containing fibulin-like extracellular matrix protein 1 (EFEMP1).